Here is a 209-residue protein sequence, read N- to C-terminus: Orotate phosphoribosyltransferase (209 aa).

5-phospho-alpha-D-ribose 1-diphosphate-binding positions include Arg-96, Lys-100, His-102, and 122–130; that span reads EDLISTGGS. Ser-126 lines the orotate pocket.

Belongs to the purine/pyrimidine phosphoribosyltransferase family. PyrE subfamily. As to quaternary structure, homodimer. It depends on Mg(2+) as a cofactor.

It carries out the reaction orotidine 5'-phosphate + diphosphate = orotate + 5-phospho-alpha-D-ribose 1-diphosphate. It functions in the pathway pyrimidine metabolism; UMP biosynthesis via de novo pathway; UMP from orotate: step 1/2. Catalyzes the transfer of a ribosyl phosphate group from 5-phosphoribose 1-diphosphate to orotate, leading to the formation of orotidine monophosphate (OMP). This is Orotate phosphoribosyltransferase from Listeria monocytogenes serotype 4b (strain F2365).